A 268-amino-acid polypeptide reads, in one-letter code: Cytochrome c oxidase subunit 3 (268 aa).

Transmembrane regions (helical) follow at residues 23–43, 49–69, 88–108, 141–161, 166–186, 203–223, and 246–266; these read ILVSFSVMSIMLTLVFNMHGF, WVVFSAIVAIMTMALWFRDII, IGFILFVVSELFFFIAIFWAF, TILLLCSGATLTWSHHALLGG, TLLGLILTIALAVTFMICQYM, VFYFGTGFHGLHIIIGIIMLG, and ILYYHFVDVVWLFLYIVFYWW.

This sequence belongs to the cytochrome c oxidase subunit 3 family. Component of the cytochrome c oxidase (complex IV, CIV), a multisubunit enzyme composed of a catalytic core of 3 subunits and several supernumerary subunits. The complex exists as a monomer or a dimer and forms supercomplexes (SCs) in the inner mitochondrial membrane with ubiquinol-cytochrome c oxidoreductase (cytochrome b-c1 complex, complex III, CIII).

It is found in the mitochondrion inner membrane. The catalysed reaction is 4 Fe(II)-[cytochrome c] + O2 + 8 H(+)(in) = 4 Fe(III)-[cytochrome c] + 2 H2O + 4 H(+)(out). Its function is as follows. Component of the cytochrome c oxidase, the last enzyme in the mitochondrial electron transport chain which drives oxidative phosphorylation. The respiratory chain contains 3 multisubunit complexes succinate dehydrogenase (complex II, CII), ubiquinol-cytochrome c oxidoreductase (cytochrome b-c1 complex, complex III, CIII) and cytochrome c oxidase (complex IV, CIV), that cooperate to transfer electrons derived from NADH and succinate to molecular oxygen, creating an electrochemical gradient over the inner membrane that drives transmembrane transport and the ATP synthase. Cytochrome c oxidase is the component of the respiratory chain that catalyzes the reduction of oxygen to water. Electrons originating from reduced cytochrome c in the intermembrane space (IMS) are transferred via the dinuclear copper A center (CU(A)) of subunit 2 and heme A of subunit 1 to the active site in subunit 1, a binuclear center (BNC) formed by heme A3 and copper B (CU(B)). The BNC reduces molecular oxygen to 2 water molecules using 4 electrons from cytochrome c in the IMS and 4 protons from the mitochondrial matrix. The sequence is that of Cytochrome c oxidase subunit 3 (COX3) from Yarrowia lipolytica (strain CLIB 122 / E 150) (Yeast).